A 204-amino-acid polypeptide reads, in one-letter code: Ribosomal RNA small subunit methyltransferase G (204 aa).

Residues Gly-73, Phe-78, and Arg-139 each coordinate S-adenosyl-L-methionine.

It belongs to the methyltransferase superfamily. RNA methyltransferase RsmG family.

It is found in the cytoplasm. It carries out the reaction guanosine(527) in 16S rRNA + S-adenosyl-L-methionine = N(7)-methylguanosine(527) in 16S rRNA + S-adenosyl-L-homocysteine. Specifically methylates the N7 position of guanine in position 527 of 16S rRNA. This chain is Ribosomal RNA small subunit methyltransferase G, found in Coxiella burnetii (strain RSA 331 / Henzerling II).